Consider the following 790-residue polypeptide: Ribosome biogenesis protein ERB1 (790 aa).

The segment at 1-93 (MAKKNTVTGS…SDELQDDSNS (93 aa)) is disordered. Over residues 20–89 (SPEVSESEEI…SEDFSDELQD (70 aa)) the composition is skewed to acidic residues. Positions 255-371 (RFVPSKHEAK…LRKVPAYQEN (117 aa)) are required for interaction with NOP7. The interval 371–407 (NLRERFERSLDLYLAPRVRHNKLNIDPDSLIPDLPSP) is required for interaction with YTM1. 7 WD repeats span residues 423-462 (GHIGRVRTLSIDPSGLWLATGGDDGTVRVWEILTGRQVYH), 470-510 (KDDD…YEIE), 574-616 (QCRK…SQSP), 619-657 (KSKGIIVDAKFHPFKPQLFVASQRSIKIYDLSQQVLTKK), 660-699 (PGARYLSGIDIHPRGDHLLASSYDKRVLWHDLDLSNTPYK), 703-743 (YHEK…DLMT), and 759-790 (VHSLGVLDLVWHPKEAWLFTAGADGTARLWTT).

This sequence belongs to the WD repeat BOP1/ERB1 family. In terms of assembly, component of the NOP7 complex, composed of ERB1, NOP7 and YTM1. The complex is held together by ERB1, which interacts with NOP7 via its N-terminal domain and with YTM1 via a high-affinity interaction between the seven-bladed beta-propeller domains of the 2 proteins. The NOP7 complex associates with the 66S pre-ribosome.

The protein localises to the nucleus. It localises to the nucleolus. The protein resides in the nucleoplasm. In terms of biological role, component of the NOP7 complex, which is required for maturation of the 25S and 5.8S ribosomal RNAs and formation of the 60S ribosome. The chain is Ribosome biogenesis protein ERB1 from Meyerozyma guilliermondii (strain ATCC 6260 / CBS 566 / DSM 6381 / JCM 1539 / NBRC 10279 / NRRL Y-324) (Yeast).